The chain runs to 75 residues: Conotoxin Leo-O3 (75 aa).

An N-terminal signal peptide occupies residues 1-22 (MKLTCVVIVAVLFLTACQLATA). Positions 23–42 (DISGGMRKHRALRSTTKLSR) are excised as a propeptide. 3 cysteine pairs are disulfide-bonded: Cys47–Cys60, Cys54–Cys63, and Cys59–Cys69. Cysteine amide is present on Cys69. Residues 70–75 (GSGLHV) constitute a propeptide that is removed on maturation.

This sequence belongs to the conotoxin O1 superfamily. In terms of tissue distribution, expressed by the venom duct.

The protein resides in the secreted. The polypeptide is Conotoxin Leo-O3 (Conus leopardus (Leopard cone)).